A 251-amino-acid chain; its full sequence is MLAKRIIPCLDVRDGRVVKGINFEGLRDAGSILEQARFYNNELADELVFLDISASLESRKTTLEEVLKVSGEVFIPLTVGGGINSVERAKEVFLHGADKVSVNTAAVNNPELISRIAEKYGSQAVVVAVDIKKIGDRYIVHTHSGKQPTEYEALEWALKVQELGAGEILLTSMDRDGTKEGYDNESLALISTSVHIPVIASGGAGSLEHLYDGFTKGRADAALAASIFHFRQHSIREAKQYLHDRGITVRL.

Residues aspartate 11 and aspartate 130 contribute to the active site.

Belongs to the HisA/HisF family. Heterodimer of HisH and HisF.

Its subcellular location is the cytoplasm. It catalyses the reaction 5-[(5-phospho-1-deoxy-D-ribulos-1-ylimino)methylamino]-1-(5-phospho-beta-D-ribosyl)imidazole-4-carboxamide + L-glutamine = D-erythro-1-(imidazol-4-yl)glycerol 3-phosphate + 5-amino-1-(5-phospho-beta-D-ribosyl)imidazole-4-carboxamide + L-glutamate + H(+). The protein operates within amino-acid biosynthesis; L-histidine biosynthesis; L-histidine from 5-phospho-alpha-D-ribose 1-diphosphate: step 5/9. Functionally, IGPS catalyzes the conversion of PRFAR and glutamine to IGP, AICAR and glutamate. The HisF subunit catalyzes the cyclization activity that produces IGP and AICAR from PRFAR using the ammonia provided by the HisH subunit. This is Imidazole glycerol phosphate synthase subunit HisF from Chlorobium phaeovibrioides (strain DSM 265 / 1930) (Prosthecochloris vibrioformis (strain DSM 265)).